The primary structure comprises 227 residues: Brain acid soluble protein 1 (227 aa).

Basic residues predominate over residues 1–11; that stretch reads MGGKLSKKKKG. Positions 1–227 are disordered; sequence MGGKLSKKKK…NSDQTVAVKE (227 aa). Glycine 2 is lipidated: N-myristoyl glycine. Over residues 15–27 the composition is skewed to basic and acidic residues; sequence NDEKAKDKDKKAE. Lysine 25 is covalently cross-linked (Glycyl lysine isopeptide (Lys-Gly) (interchain with G-Cter in SUMO2)). A phosphothreonine mark is found at threonine 31 and threonine 36. 2 stretches are compositionally biased toward basic and acidic residues: residues 49-107 and 137-150; these read PEVK…KDAE and TKDDKSKEGGDATK. Glycyl lysine isopeptide (Lys-Gly) (interchain with G-Cter in SUMO2) cross-links involve residues lysine 87 and lysine 99. Low complexity predominate over residues 151–161; it reads TEAPAAPAAQE. A Glycyl lysine isopeptide (Lys-Gly) (interchain with G-Cter in SUMO2) cross-link involves residue lysine 163. Phosphoserine occurs at positions 164, 170, 172, 176, and 195. A compositionally biased stretch (polar residues) spans 172 to 185; it reads SKPSSTEAAPSSKE. A Phosphothreonine modification is found at threonine 196. Polar residues predominate over residues 216–227; it reads AANSDQTVAVKE. Phosphoserine is present on serine 219.

This sequence belongs to the BASP1 family. In terms of tissue distribution, brain.

Its subcellular location is the cell membrane. It localises to the cell projection. The protein resides in the growth cone. The polypeptide is Brain acid soluble protein 1 (BASP1) (Bos taurus (Bovine)).